A 723-amino-acid polypeptide reads, in one-letter code: Probable cadmium-transporting ATPase (723 aa).

The HMA domain maps to 12–75 (EMKAYRVQGF…AGAFENLKVT (64 aa)). Positions 23 and 26 each coordinate Cd(2+). Helical transmembrane passes span 103 to 123 (STLL…YVNG), 127 to 147 (IVTT…LFKV), 168 to 188 (IGGA…LFAI), 329 to 349 (YYTP…PLFF), and 361 to 381 (LAVL…ISIV). Residue D412 is the 4-aspartylphosphate intermediate of the active site. Helical transmembrane passes span 671–690 (IIKA…LLLV) and 694–716 (WLTL…LNGL).

It belongs to the cation transport ATPase (P-type) (TC 3.A.3) family. Type IB subfamily.

The protein localises to the cell membrane. The enzyme catalyses Cd(2+)(in) + ATP + H2O = Cd(2+)(out) + ADP + phosphate + H(+). Couples the hydrolysis of ATP with the export of cadmium. This Alkalihalophilus pseudofirmus (strain ATCC BAA-2126 / JCM 17055 / OF4) (Bacillus pseudofirmus) protein is Probable cadmium-transporting ATPase (cadA).